A 138-amino-acid polypeptide reads, in one-letter code: Histone H2AX (138 aa).

Positions 1-23 (MSTTGKGGKAKGKTASSKQVSRS) are disordered. N-acetylserine is present on Ser2. Lys6, Lys9, Lys11, Lys13, and Lys18 each carry N6-acetyllysine. Ser123 carries the phosphoserine modification. Lys124 participates in a covalent cross-link: Glycyl lysine isopeptide (Lys-Gly) (interchain with G-Cter in ubiquitin). 3 positions are modified to phosphoserine: Ser125, Ser130, and Ser135. A [ST]-Q motif motif is present at residues 135–136 (SQ).

This sequence belongs to the histone H2A family. In terms of assembly, the nucleosome is a histone octamer containing two molecules each of H2A, H2B, H3 and H4 assembled in one H3-H4 heterotetramer and two H2A-H2B heterodimers. The octamer wraps approximately 147 bp of DNA. In terms of processing, monoubiquitination of Lys-124 gives a specific tag for epigenetic transcriptional repression. Post-translationally, acetylation occurs almost exclusively in the MAC.

Its subcellular location is the nucleus. The protein localises to the chromosome. Its function is as follows. Core component of nucleosome. Nucleosomes wrap and compact DNA into chromatin, limiting DNA accessibility to the cellular machineries which require DNA as a template. Histones thereby play a central role in transcription regulation, DNA repair, DNA replication and chromosomal stability. DNA accessibility is regulated via a complex set of post-translational modifications of histones, also called histone code, and nucleosome remodeling. The sequence is that of Histone H2AX (HTA1) from Tetrahymena pyriformis.